A 1404-amino-acid polypeptide reads, in one-letter code: DNA-directed RNA polymerase subunit beta' (1404 aa).

The Zn(2+) site is built by Cys-60, Cys-62, Cys-75, and Cys-78. Mg(2+) is bound by residues Asp-449, Asp-451, and Asp-453. Zn(2+)-binding residues include Cys-778, Cys-852, Cys-859, and Cys-862. A disordered region spans residues 1380–1404 (LDRPLEEEEEEEIPQAIAEESDAEE). A compositionally biased stretch (acidic residues) spans 1384–1404 (LEEEEEEEIPQAIAEESDAEE).

The protein belongs to the RNA polymerase beta' chain family. As to quaternary structure, the RNAP catalytic core consists of 2 alpha, 1 beta, 1 beta' and 1 omega subunit. When a sigma factor is associated with the core the holoenzyme is formed, which can initiate transcription. Mg(2+) is required as a cofactor. Zn(2+) serves as cofactor.

The catalysed reaction is RNA(n) + a ribonucleoside 5'-triphosphate = RNA(n+1) + diphosphate. In terms of biological role, DNA-dependent RNA polymerase catalyzes the transcription of DNA into RNA using the four ribonucleoside triphosphates as substrates. This is DNA-directed RNA polymerase subunit beta' from Leptospira interrogans serogroup Icterohaemorrhagiae serovar Lai (strain 56601).